A 277-amino-acid chain; its full sequence is NH(3)-dependent NAD(+) synthetase (277 aa).

47-54 contributes to the ATP binding site; the sequence is GISGGQDS. Residue aspartate 53 coordinates Mg(2+). Arginine 141 contributes to the deamido-NAD(+) binding site. Threonine 161 contacts ATP. Residue glutamate 166 participates in Mg(2+) binding. Deamido-NAD(+) contacts are provided by lysine 174 and aspartate 181. Lysine 190 and threonine 212 together coordinate ATP. 261–262 provides a ligand contact to deamido-NAD(+); that stretch reads HK.

This sequence belongs to the NAD synthetase family. In terms of assembly, homodimer.

It catalyses the reaction deamido-NAD(+) + NH4(+) + ATP = AMP + diphosphate + NAD(+) + H(+). The protein operates within cofactor biosynthesis; NAD(+) biosynthesis; NAD(+) from deamido-NAD(+) (ammonia route): step 1/1. Catalyzes the ATP-dependent amidation of deamido-NAD to form NAD. Uses ammonia as a nitrogen source. The chain is NH(3)-dependent NAD(+) synthetase from Lactobacillus gasseri (strain ATCC 33323 / DSM 20243 / BCRC 14619 / CIP 102991 / JCM 1131 / KCTC 3163 / NCIMB 11718 / NCTC 13722 / AM63).